The sequence spans 321 residues: MNINLDRTSSGFCIGVQGTIYAAEEKLQQEGGLYSFGDIVHNEVEVKRLEALGLVTVDERAFRELRDAHVLIRAHGEPPSTYRIARENNLTVTDTTCPVVSRLQRTTRLLFELGYQIIIYGKQSHPEVIGINGQCNNQAVIIKHADLSDPDELKGLDLAKKSALISQTTMDVPGFYELKALLEARFAQYLSSEKSAWMAIRDIDITAAMTGVLSMPSLLFKDTICRQVSSRNQKLHDFSLANDVVIFVAGKKSSNGQVLYHICKEANPRSYFIEEIEEIEERWLRNSDGRAVATVGVCGATSTPMWHLEKVALHLEKNFAQ.

A [4Fe-4S] cluster-binding site is contributed by cysteine 13. Residues histidine 41 and histidine 75 each contribute to the (2E)-4-hydroxy-3-methylbut-2-enyl diphosphate site. Histidine 41 and histidine 75 together coordinate dimethylallyl diphosphate. Residues histidine 41 and histidine 75 each coordinate isopentenyl diphosphate. Cysteine 97 contacts [4Fe-4S] cluster. Histidine 125 contacts (2E)-4-hydroxy-3-methylbut-2-enyl diphosphate. Histidine 125 contributes to the dimethylallyl diphosphate binding site. Histidine 125 serves as a coordination point for isopentenyl diphosphate. The active-site Proton donor is the glutamate 127. Position 168 (threonine 168) interacts with (2E)-4-hydroxy-3-methylbut-2-enyl diphosphate. [4Fe-4S] cluster is bound at residue cysteine 225. Positions 253, 254, 255, and 302 each coordinate (2E)-4-hydroxy-3-methylbut-2-enyl diphosphate. Dimethylallyl diphosphate-binding residues include serine 253, serine 254, asparagine 255, and serine 302. Isopentenyl diphosphate is bound by residues serine 253, serine 254, asparagine 255, and serine 302.

It belongs to the IspH family. [4Fe-4S] cluster serves as cofactor.

The enzyme catalyses isopentenyl diphosphate + 2 oxidized [2Fe-2S]-[ferredoxin] + H2O = (2E)-4-hydroxy-3-methylbut-2-enyl diphosphate + 2 reduced [2Fe-2S]-[ferredoxin] + 2 H(+). It catalyses the reaction dimethylallyl diphosphate + 2 oxidized [2Fe-2S]-[ferredoxin] + H2O = (2E)-4-hydroxy-3-methylbut-2-enyl diphosphate + 2 reduced [2Fe-2S]-[ferredoxin] + 2 H(+). Its pathway is isoprenoid biosynthesis; dimethylallyl diphosphate biosynthesis; dimethylallyl diphosphate from (2E)-4-hydroxy-3-methylbutenyl diphosphate: step 1/1. It participates in isoprenoid biosynthesis; isopentenyl diphosphate biosynthesis via DXP pathway; isopentenyl diphosphate from 1-deoxy-D-xylulose 5-phosphate: step 6/6. In terms of biological role, catalyzes the conversion of 1-hydroxy-2-methyl-2-(E)-butenyl 4-diphosphate (HMBPP) into a mixture of isopentenyl diphosphate (IPP) and dimethylallyl diphosphate (DMAPP). Acts in the terminal step of the DOXP/MEP pathway for isoprenoid precursor biosynthesis. The sequence is that of 4-hydroxy-3-methylbut-2-enyl diphosphate reductase from Pelodictyon phaeoclathratiforme (strain DSM 5477 / BU-1).